Reading from the N-terminus, the 2000-residue chain is Sodium channel protein type 3 subunit alpha (2000 aa).

Residues 1-128 (MAQALLVPPG…KIAIKILVHS (128 aa)) are Cytoplasmic-facing. Residues 28 to 60 (RAAEEKAKKPKKEQDNDDENKPKPNSDLEAGKN) form a disordered region. Residues 46 to 57 (ENKPKPNSDLEA) show a composition bias toward basic and acidic residues. One copy of the I repeat lies at 110–455 (ILTPLNPVRK…QQMLEQLKKQ (346 aa)). Residues 129–146 (LFSMLIMCTILTNCVFMT) form a helical membrane-spanning segment. The Extracellular portion of the chain corresponds to 147-152 (LSNPPD). A helical membrane pass occupies residues 153–174 (WTKNVEYTFTGIYTFESLIKIL). Residues 175-188 (ARGFCLEDFTFLRD) are Cytoplasmic-facing. Residues 189–206 (PWNWLDFSVIVMAYVTEF) traverse the membrane as a helical segment. The Extracellular segment spans residues 207-213 (VSLGNVS). N-linked (GlcNAc...) asparagine glycosylation is present at Asn-211. Residues 214-235 (ALRTFRVLRALKTISVIPGLKT) form a helical membrane-spanning segment. The Cytoplasmic segment spans residues 236 to 249 (IVGALIQSVKKLSD). The helical transmembrane segment at 250–269 (VMILTVFCLSVFALIGLQLF) threads the bilayer. At 270–369 (MGNLRNKCLQ…NYGYTSFDTF (100 aa)) the chain is on the extracellular side. N-linked (GlcNAc...) asparagine glycosylation is found at Asn-290, Asn-296, Asn-302, Asn-307, and Asn-339. An intramembrane region (pore-forming) is located at residues 370 to 386 (SWAFLSLFRLMTQDYWE). The Extracellular segment spans residues 387 to 397 (NLYQLTLRAAG). The chain crosses the membrane as a helical span at residues 398–424 (KTYMIFFVLVIFLGSFYLVNLILAVVA). Residues 425–761 (MAYEEQNQAT…LVNLIVMDPF (337 aa)) lie on the Cytoplasmic side of the membrane. A phosphoserine mark is found at Ser-484, Ser-485, and Ser-486. 3 disordered regions span residues 493 to 528 (SKSA…KSES), 587 to 631 (VGSE…ASMS), and 662 to 681 (ALTS…ETEV). Positions 500-509 (RNRRKKRRQR) are enriched in basic residues. Basic and acidic residues-rich tracts occupy residues 510–528 (EHLE…KSES) and 596–610 (DEHS…RRDS). A compositionally biased stretch (polar residues) spans 662–678 (ALTSPTGQLPPEGTTTE). An II repeat occupies 742–1014 (CCDAWLKVKH…QIAVGRMQKG (273 aa)). The chain crosses the membrane as a helical span at residues 762–779 (VDLAITICIVLNTLFMAM). The Extracellular segment spans residues 780–787 (EHYPMTEQ). Residues 788-812 (FSSVLTVGNLVFTGIFTAEMVLKII) form a helical membrane-spanning segment. The Cytoplasmic portion of the chain corresponds to 813-822 (AMDPYYYFQE). A helical transmembrane segment spans residues 823 to 842 (GWNIFDGIIVSLSLMELGLS). Residues 843–846 (NVEG) are Extracellular-facing. The helical transmembrane segment at 847-865 (LSVLRSFRLLRVFKLAKSW) threads the bilayer. Residues 866-883 (PTLNMLIKIIGNSVGALG) lie on the Cytoplasmic side of the membrane. Residues 884 to 904 (NLTLVLAIIVFIFAVVGMQLF) traverse the membrane as a helical segment. The Extracellular portion of the chain corresponds to 905-929 (GKSYKECVCKINDDCTLPRWHMNDF). Cys-913 and Cys-919 are joined by a disulfide. The pore-forming intramembrane region spans 930–945 (FHSFLIVFRVLCGEWI). The Extracellular segment spans residues 946-956 (ETMWDCMEVAG). Cys-951 and Cys-960 are disulfide-bonded. Residues 957–983 (QTMCLIVFMLVMVIGNLVVLNLFLALL) form a helical membrane-spanning segment. At 984-1205 (LSSFSSDNLA…RKTCYSIVEH (222 aa)) the chain is on the cytoplasmic side. Residues 1118-1162 (EEFSSESELEESKEKLNATSSSEGSTVDVVLPREGEQAETEPEED) are disordered. Residues 1188–1499 (KGKIWWNLRK…KKYYNAMKKL (312 aa)) form an III repeat. A helical membrane pass occupies residues 1206 to 1226 (NWFETFIVFMILLSSGALAFE). The Extracellular segment spans residues 1227–1238 (DIYIEQRKTIKT). Residues 1239-1260 (MLEYADKVFTYIFILEMLLKWV) traverse the membrane as a helical segment. Residues 1261-1266 (AYGFQT) lie on the Cytoplasmic side of the membrane. Residues 1267-1292 (YFTNAWCWLDFLIVDVSLVSLVANAL) traverse the membrane as a helical segment. Topologically, residues 1293-1301 (GYSELGAIK) are extracellular. The helical transmembrane segment at 1302-1320 (SLRTLRALRPLRALSRFEG) threads the bilayer. At 1321–1333 (MRVVVNALVGAIP) the chain is on the cytoplasmic side. Residues 1334-1356 (SIMNVLLVCLIFWLIFSIMGVNL) form a helical membrane-spanning segment. Residues 1357 to 1402 (FAGKFYHCVNMTTGNMFDISDVNNLSDCQALGKQARWKNVKVNFDN) lie on the Extracellular side of the membrane. A disulfide bridge links Cys-1364 with Cys-1384. Residues Asn-1366 and Asn-1380 are each glycosylated (N-linked (GlcNAc...) asparagine). Residues 1403-1419 (VGAGYLALLQVATFKGW) constitute an intramembrane region (pore-forming). The Extracellular segment spans residues 1420–1442 (MDIMYAAVDSRDVKLQPVYEENL). Residues 1443–1468 (YMYLYFVIFIIFGSFFTLNLFIGVII) form a helical membrane-spanning segment. The Cytoplasmic portion of the chain corresponds to 1469–1526 (DNFNQQKKKFGGQDIFMTEEQKKYYNAMKKLGSKKPQKPIPRPANKFQGMVFDFVTRQ). At Ser-1501 the chain carries Phosphoserine; by PKC. The IV repeat unit spans residues 1508-1806 (IPRPANKFQG…WEKFDPDATQ (299 aa)). Residues 1527–1545 (VFDISIMILICLNMVTMMV) form a helical membrane-spanning segment. The Extracellular portion of the chain corresponds to 1546–1553 (ETDDQGKY). The helical transmembrane segment at 1554–1577 (MTLVLSRINLVFIVLFTGEFVLKL) threads the bilayer. Residues 1578–1587 (VSLRHYYFTI) are Cytoplasmic-facing. The chain crosses the membrane as a helical span at residues 1588-1605 (GWNIFDFVVVILSIVGMF). Residues 1606–1617 (LAEMIEKYFVSP) are Extracellular-facing. The chain crosses the membrane as a helical span at residues 1618-1640 (TLFRVIRLARIGRILRLIKGAKG). Residues 1641–1653 (IRTLLFALMMSLP) are Cytoplasmic-facing. The helical transmembrane segment at 1654–1677 (ALFNIGLLLFLVMFIYAIFGMSNF) threads the bilayer. The Extracellular portion of the chain corresponds to 1678–1699 (AYVKKEAGIDDMFNFETFGNSM). Positions 1700-1712 (ICLFQITTSAGWD) form an intramembrane region, pore-forming. Residues 1713–1744 (GLLAPILNSAPPDCDPDTIHPGSSVKGDCGNP) are Extracellular-facing. The chain crosses the membrane as a helical span at residues 1745-1770 (SVGIFFFVSYIIISFLVVVNMYIAVI). At 1771 to 2000 (LENFSVATEE…KGKEVRENQK (230 aa)) the chain is on the cytoplasmic side. The IQ domain maps to 1900-1929 (EEVSAAIIQRNFRCYLLKQRLKNISSNYNK). The tract at residues 1949 to 2000 (LNGNSTPEKTDGSSSTTSPPSYDSVTKPDKEKFEKDKPEKESKGKEVRENQK) is disordered. Residues 1974–2000 (TKPDKEKFEKDKPEKESKGKEVRENQK) show a composition bias toward basic and acidic residues.

The protein belongs to the sodium channel (TC 1.A.1.10) family. Nav1.3/SCN3A subfamily. In terms of assembly, heterooligomer of an alpha subunit, SCN3A, and 1 to 3 regulatory beta subunits including SCN1B and SCN2B; disulfide-linked with some beta subunits like SCN2B. Interacts with NEDD4L; could regulate expression of SCN3A at the plasma membrane through ubiquitination-regulated endocytosis. Interacts with the conotoxin GVIIJ. Post-translationally, may be ubiquitinated by NEDD4L; which would promote its endocytosis. Phosphorylation at Ser-1501 by PKC in a highly conserved cytoplasmic loop slows inactivation of the sodium channel and reduces peak sodium currents. As to expression, expressed in enterochromaffin cells in both colon and small bowel (at protein level).

It is found in the cell membrane. It localises to the basal cell membrane. The catalysed reaction is Na(+)(in) = Na(+)(out). Functionally, pore-forming subunit of Nav1.3, a voltage-gated sodium (Nav) channel that directly mediates the depolarizing phase of action potentials in excitable membranes. Navs, also called VGSCs (voltage-gated sodium channels) or VDSCs (voltage-dependent sodium channels), operate by switching between closed and open conformations depending on the voltage difference across the membrane. In the open conformation they allow Na(+) ions to selectively pass through the pore, along their electrochemical gradient. The influx of Na+ ions provokes membrane depolarization, initiating the propagation of electrical signals throughout cells and tissues. In some secretory cell types, it also participates in cell excitability through membrane depolarization and regulates cells responsiveness to stimuli triggering secretion. For instance, it controls the release of serotonin/5-hydroxytryptamine by enterochromaffin cells and is required for both glucagon- and glucose-induced insulin secretion in pancreatic endocrine cells. The chain is Sodium channel protein type 3 subunit alpha from Homo sapiens (Human).